We begin with the raw amino-acid sequence, 733 residues long: Hypermethylated in cancer 1 protein (733 aa).

A BTB domain is found at 47 to 110 (CDVIIVVQNA…IYTGRLTDSV (64 aa)). The interval 154 to 315 (KYCHLRGGGS…PFRGSGGSPG (162 aa)) is mediates HDAC-dependent transcriptional repression. Arg-159 carries the post-translational modification Omega-N-methylarginine. A disordered region spans residues 189–209 (YSSPAGPPPPPAAEPPSGPDA). Over residues 193–206 (AGPPPPPAAEPPSG) the composition is skewed to pro residues. Residue Ser-237 is modified to Phosphoserine. The tract at residues 241-247 (GLDLSKK) is interaction with CTBP1. The tract at residues 241 to 421 (GLDLSKKSPP…PGGHLEGYPC (181 aa)) is disordered. Ser-248 bears the Phosphoserine mark. N6-acetyllysine; alternate is present on Lys-333. Residue Lys-333 forms a Glycyl lysine isopeptide (Lys-Gly) (interchain with G-Cter in SUMO); alternate linkage. A compositionally biased stretch (basic and acidic residues) spans 344 to 361 (ELVRDRGSPGERLEERGG). Ser-366 is subject to Phosphoserine. A compositionally biased stretch (pro residues) spans 368–380 (GGPPLGLVPPPRY). 5 C2H2-type zinc fingers span residues 437-464 (YVCI…EEEE), 507-534 (YRCA…LTRP), 535-562 (YPCT…GLKP), 563-590 (FACD…GEKP), and 591-618 (YECQ…VGGA). At Ser-704 the chain carries Phosphoserine.

This sequence belongs to the krueppel C2H2-type zinc-finger protein family. Hic subfamily. In terms of assembly, self-associates. Interacts with HIC2. Interacts with CTBP1 and CTBP2. Interacts with TCF7L2 and ARID1A. Interacts with MTA1 and MBD3; indicative for an association with the NuRD complex. Interacts with SIRT1. Acetylated on several residues, including Lys-333. Lys-333 is deacetylated by SIRT1. Post-translationally, sumoylated on Lys-333 by a PIAS family member, which enhances interaction with MTA1, positively regulates transcriptional repression activity and is enhanced by HDAC4. Ubiquitously expressed with highest levels in heart and lung.

It is found in the nucleus. Transcriptional repressor. Recognizes and binds to the consensus sequence '5-[CG]NG[CG]GGGCA[CA]CC-3'. May act as a tumor suppressor. Involved in development of head, face, limbs and ventral body wall. Involved in down-regulation of SIRT1 and thereby is involved in regulation of p53/TP53-dependent apoptotic DNA-damage responses. The specific target gene promoter association seems to be depend on corepressors, such as CTBP1 or CTBP2 and MTA1. In cooperation with MTA1 (indicative for an association with the NuRD complex) represses transcription from CCND1/cyclin-D1 and CDKN1C/p57Kip2 specifically in quiescent cells. Involved in regulation of the Wnt signaling pathway probably by association with TCF7L2 and preventing TCF7L2 and CTNNB1 association with promoters of TCF-responsive genes. Seems to repress transcription from E2F1 and ATOH1 which involves ARID1A, indicative for the participation of a distinct SWI/SNF-type chromatin-remodeling complex. Probably represses transcription from ACKR3, FGFBP1 and EFNA1. The sequence is that of Hypermethylated in cancer 1 protein (Hic1) from Mus musculus (Mouse).